Reading from the N-terminus, the 338-residue chain is Arginase, mitochondrial (338 aa).

A mitochondrion-targeting transit peptide spans 1–15 (MSTIARRGFHYMQRL). Residues serine 73 and 92–95 (DSTN) each bind L-ornithine. Mn(2+) contacts are provided by histidine 157, aspartate 181, histidine 183, and aspartate 185. Residue 185–187 (DLY) coordinates L-ornithine. A substrate-binding site is contributed by 191–193 (EGN). Serine 220 is a binding site for L-ornithine. Residues aspartate 266 and aspartate 268 each contribute to the Mn(2+) site. Glutamate 309 serves as a coordination point for substrate.

This sequence belongs to the arginase family. Forms homohexamers. Mn(2+) is required as a cofactor.

Its subcellular location is the mitochondrion. The enzyme catalyses L-arginine + H2O = urea + L-ornithine. The catalysed reaction is agmatine + H2O = urea + putrescine. It participates in nitrogen metabolism; urea cycle; L-ornithine and urea from L-arginine: step 1/1. The protein operates within amine and polyamine biosynthesis; putrescine biosynthesis via agmatine pathway; putrescine from agmatine: step 1/1. Functionally, catalyzes the hydrolysis of L-arginine to urea and L-ornithine. The latter can be utilized in the urea cycle or as a precursor for the synthesis of both polyamines and proline. Possesses agmatinase activity. Catalyzes the formation of putrescine from agmatine. This Medicago truncatula (Barrel medic) protein is Arginase, mitochondrial.